Reading from the N-terminus, the 432-residue chain is MAIEKPVIVACACPLAGHVGPVLSLVRGLLNRGYEVTFVTGNAFKEKVIEAGCTFVPLQGRADYHEYNLPEIAPGLLTIPPGLEQTGYSMNEIFVKAIPEQYDALQTALKQVEAENKSAVVIGETMFLGVHPISLGAPGLKPQGVITLGTIPCMLKAEKAPGVPSLEPMIDTLVRQQVFQPGTDSEKEIMKTLGATKEPEFLLENIYSSPDRFLQLCPPSLEFHLTSPPPGFSFAGSAPHVKSAGLATPPHLPSWWPDVLSAKRLIVVTQGTAAINYEDLLIPALQAFADEEDTLVVGILGVKGASLPDSVKVPANARIVDYFPYDELLPHASVFIYNGGYGGLQHSLSHGVPVIIGGGMLVDKPAVASRAVWAGVGYDLQTLQATSELVSTAVKEVLATPSYHEKAMAVKKELEKYKSLDILESAISELAS.

It belongs to the UDP-glycosyltransferase family.

It catalyses the reaction (9Z)-17-hydroxyoctadec-9-enoate 17-O-beta-D-glucoside + UDP-alpha-D-glucose = (9Z)-17-hydroxyoctadec-9-enoate 17-O-sophoroside + UDP + H(+). Catalyzes the second glycosylation step of sophorolipid biosynthesis, the further glucosylation of the previoulsy formed glucolipid to give rise to an acidic sophorolipid. This chain is UDP-glucosyltransferase B1, found in Starmerella bombicola (Yeast).